The primary structure comprises 340 residues: GPALPP motifs-containing protein 1 (340 aa).

Positions 1 to 304 (MARDLIGPAL…PQERIPFDRD (304 aa)) are disordered. N-acetylalanine is present on A2. Residues 7-12 (GPALPP) carry the GPALPP motif 1 motif. S28 is modified (phosphoserine). Positions 32–37 (GPALPP) match the GPALPP motif 2 motif. Residues 60-69 (GNQESEEDDS) are compositionally biased toward acidic residues. The GPALPP motif 3 signature appears at 92–97 (GPALPP). S105 is subject to Phosphoserine. Pro residues predominate over residues 107–116 (PRPIIGPALP). A GPALPP motif 4 motif is present at residues 112 to 117 (GPALPP). Residues 124–133 (QKSDKGRDDP) show a composition bias toward basic and acidic residues. At T138 the chain carries Phosphothreonine. Phosphoserine occurs at positions 140 and 141. 4 stretches are compositionally biased toward basic and acidic residues: residues 163 to 187 (EFEK…KPIV), 227 to 261 (PADR…KRLA), 269 to 279 (ESKRSESLMDI), and 287 to 304 (KAAE…FDRD). A Glycyl lysine isopeptide (Lys-Gly) (interchain with G-Cter in SUMO2) cross-link involves residue K271. A Glycyl lysine isopeptide (Lys-Gly) (interchain with G-Cter in SUMO2) cross-link involves residue K308.

The chain is GPALPP motifs-containing protein 1 (GPALPP1) from Homo sapiens (Human).